Here is a 394-residue protein sequence, read N- to C-terminus: Elongation factor Tu (394 aa).

The tr-type G domain maps to 10–204 (KPHVNVGTIG…ALDSYIPEPE (195 aa)). A G1 region spans residues 19–26 (GHVDHGKT). 19 to 26 (GHVDHGKT) serves as a coordination point for GTP. Threonine 26 serves as a coordination point for Mg(2+). The tract at residues 60–64 (GITIN) is G2. Residues 81-84 (DCPG) are G3. GTP contacts are provided by residues 81–85 (DCPGH) and 136–139 (NKCD). Positions 136-139 (NKCD) are G4. The G5 stretch occupies residues 174 to 176 (SAL).

This sequence belongs to the TRAFAC class translation factor GTPase superfamily. Classic translation factor GTPase family. EF-Tu/EF-1A subfamily. In terms of assembly, monomer.

The protein localises to the cytoplasm. It carries out the reaction GTP + H2O = GDP + phosphate + H(+). Its function is as follows. GTP hydrolase that promotes the GTP-dependent binding of aminoacyl-tRNA to the A-site of ribosomes during protein biosynthesis. This chain is Elongation factor Tu, found in Shewanella amazonensis (strain ATCC BAA-1098 / SB2B).